Reading from the N-terminus, the 301-residue chain is Vomeronasal type-1 receptor 4 (301 aa).

Topologically, residues 1–15 (MASRYVAVGMMLSQT) are extracellular. The chain crosses the membrane as a helical span at residues 16–36 (VVGVLGSFSLLLHYLSLHYIG). Topologically, residues 37–48 (CRLRSADLIVKH) are cytoplasmic. The chain crosses the membrane as a helical span at residues 49–69 (LIAASFLTLLCKGVPQTMAAF). At 70–88 (RVRYFLNAIGCKLVFYLHR) the chain is on the extracellular side. A helical transmembrane segment spans residues 89-107 (VGRGVSTGTTCLLSVFQVI). The Cytoplasmic portion of the chain corresponds to 108-126 (TVSSRKSRWAKLKEKAPKH). The chain crosses the membrane as a helical span at residues 127-147 (VGFSVLLCWILCMLVNIIFPI). At 148–185 (YVTGKRNHTNITVNKDLGDCCGRGNNKIAQTLRAMLLS) the chain is on the extracellular side. Asn154 and Asn157 each carry an N-linked (GlcNAc...) asparagine glycan. Residues 186 to 206 (FPDVLCLGFMLWASSSMVCIL) traverse the membrane as a helical segment. Residues 207 to 234 (HRHKQRVQHIHRSNLSPRASPENRATQS) lie on the Cytoplasmic side of the membrane. A helical membrane pass occupies residues 235-255 (ILIPVSTFVSSYTLSCLLQVC). The Extracellular segment spans residues 256-264 (MALLDNPNS). Residues 265-285 (LLVNTSALMSACFPTLSPFVL) traverse the membrane as a helical segment. Residues 286 to 301 (MSCDPSVYRLCFAWKR) are Cytoplasmic-facing.

This sequence belongs to the G-protein coupled receptor 1 family.

Its subcellular location is the cell membrane. Functionally, putative pheromone receptor. The chain is Vomeronasal type-1 receptor 4 (VN1R4) from Pongo pygmaeus (Bornean orangutan).